The chain runs to 212 residues: Stringent starvation protein A homolog (212 aa).

The region spanning 9 to 87 is the GST N-terminal domain; that stretch reads SVMTLFSNKD…YLDERFPHPP (79 aa). The GST C-terminal domain occupies 92 to 212; sequence YPVSRAKDRL…AAPKNLMDDK (121 aa).

The protein belongs to the GST superfamily. HSP26 family.

Forms an equimolar complex with the RNA polymerase holoenzyme (RNAP) but not with the core enzyme. This chain is Stringent starvation protein A homolog (sspA), found in Haemophilus influenzae (strain ATCC 51907 / DSM 11121 / KW20 / Rd).